The sequence spans 293 residues: Pyridoxal 5'-phosphate synthase subunit PdxS (293 aa).

Asp-23 is a binding site for D-ribose 5-phosphate. The Schiff-base intermediate with D-ribose 5-phosphate role is filled by Lys-80. Gly-152 lines the D-ribose 5-phosphate pocket. Arg-164 is a binding site for D-glyceraldehyde 3-phosphate. D-ribose 5-phosphate contacts are provided by residues Gly-213 and 234 to 235 (GS).

It belongs to the PdxS/SNZ family. In terms of assembly, in the presence of PdxT, forms a dodecamer of heterodimers.

It carries out the reaction aldehydo-D-ribose 5-phosphate + D-glyceraldehyde 3-phosphate + L-glutamine = pyridoxal 5'-phosphate + L-glutamate + phosphate + 3 H2O + H(+). The protein operates within cofactor biosynthesis; pyridoxal 5'-phosphate biosynthesis. Functionally, catalyzes the formation of pyridoxal 5'-phosphate from ribose 5-phosphate (RBP), glyceraldehyde 3-phosphate (G3P) and ammonia. The ammonia is provided by the PdxT subunit. Can also use ribulose 5-phosphate and dihydroxyacetone phosphate as substrates, resulting from enzyme-catalyzed isomerization of RBP and G3P, respectively. The protein is Pyridoxal 5'-phosphate synthase subunit PdxS of Desulfovibrio desulfuricans (strain ATCC 27774 / DSM 6949 / MB).